Reading from the N-terminus, the 671-residue chain is DNA ligase (671 aa).

Residues 32–36 (DAEYD), 81–82 (SL), and Glu-113 contribute to the NAD(+) site. The active-site N6-AMP-lysine intermediate is the Lys-115. Positions 136, 173, 290, and 314 each coordinate NAD(+). Zn(2+)-binding residues include Cys-408, Cys-411, Cys-426, and Cys-432. Residues 593–671 (EIDSPFAGKT…EAEMLRLLGV (79 aa)) enclose the BRCT domain.

Belongs to the NAD-dependent DNA ligase family. LigA subfamily. The cofactor is Mg(2+). Mn(2+) serves as cofactor.

It carries out the reaction NAD(+) + (deoxyribonucleotide)n-3'-hydroxyl + 5'-phospho-(deoxyribonucleotide)m = (deoxyribonucleotide)n+m + AMP + beta-nicotinamide D-nucleotide.. DNA ligase that catalyzes the formation of phosphodiester linkages between 5'-phosphoryl and 3'-hydroxyl groups in double-stranded DNA using NAD as a coenzyme and as the energy source for the reaction. It is essential for DNA replication and repair of damaged DNA. This chain is DNA ligase, found in Salmonella arizonae (strain ATCC BAA-731 / CDC346-86 / RSK2980).